Reading from the N-terminus, the 242-residue chain is Protein crossbronx (242 aa).

One can recognise a UBC core domain in the interval 20-176 (QQEYKILAEY…VQENIKESKA (157 aa)).

Belongs to the ubiquitin-conjugating enzyme family. FTS subfamily.

The protein is Protein crossbronx (cbx) of Drosophila ananassae (Fruit fly).